The primary structure comprises 660 residues: Methionine--tRNA ligase (660 aa).

The short motif at 11 to 21 (PYANGPCHLGH) is the 'HIGH' region element. Zn(2+) is bound by residues Cys143, Cys146, Cys155, and Cys158. Positions 325 to 329 (KMSTS) match the 'KMSKS' region motif. Residue Thr328 participates in ATP binding. The region spanning 563 to 660 (DFDKVVIKIG…DECEVGERIQ (98 aa)) is the tRNA-binding domain.

This sequence belongs to the class-I aminoacyl-tRNA synthetase family. MetG type 1 subfamily. Homodimer. The cofactor is Zn(2+).

It localises to the cytoplasm. It carries out the reaction tRNA(Met) + L-methionine + ATP = L-methionyl-tRNA(Met) + AMP + diphosphate. In terms of biological role, is required not only for elongation of protein synthesis but also for the initiation of all mRNA translation through initiator tRNA(fMet) aminoacylation. This is Methionine--tRNA ligase from Methanobrevibacter smithii (strain ATCC 35061 / DSM 861 / OCM 144 / PS).